We begin with the raw amino-acid sequence, 294 residues long: 4-hydroxy-tetrahydrodipicolinate synthase (294 aa).

Thr47 contacts pyruvate. Tyr135 acts as the Proton donor/acceptor in catalysis. Catalysis depends on Lys163, which acts as the Schiff-base intermediate with substrate. Ile205 is a binding site for pyruvate.

Belongs to the DapA family. Homotetramer; dimer of dimers.

The protein localises to the cytoplasm. The catalysed reaction is L-aspartate 4-semialdehyde + pyruvate = (2S,4S)-4-hydroxy-2,3,4,5-tetrahydrodipicolinate + H2O + H(+). Its pathway is amino-acid biosynthesis; L-lysine biosynthesis via DAP pathway; (S)-tetrahydrodipicolinate from L-aspartate: step 3/4. In terms of biological role, catalyzes the condensation of (S)-aspartate-beta-semialdehyde [(S)-ASA] and pyruvate to 4-hydroxy-tetrahydrodipicolinate (HTPA). The sequence is that of 4-hydroxy-tetrahydrodipicolinate synthase from Rickettsia prowazekii (strain Madrid E).